We begin with the raw amino-acid sequence, 562 residues long: MDLPEGPVGGPTAEMYLRERPEEARLGMPVSLEEQILNSTFEACDPQRTGTVAVAQVLAYLEAVTGQGPQDARLQTLANSLDPNGEGPKATVDLDTFLVVMRDWIAACQLHGGLELEEETAFQGALTSRQLPSGCPEAEEPANLESFGGEDPRPELQATADLLSSLEDLELSNRRLVGENAKLQRSMETAEEGSARLGEEILALRKQLHSTQQALQFAKAMDEELEDLKTLARSLEEQNRSLLAQARQAEKEQQHLVAEMETLQEENGKLLAERDGVKKRSQELAMEKDTLKRQLFECEHLICQRDTILSERTRDVESLAQTLEEYRVTTQELRLEISRLEEQLSQTYEGPDELPEGAQLRRVGWTELLPPSLGLEIEAIRQKQEVATADLSNPLCGVWQWEEVIHETSEETEFPSEAPAGGQRNFQGEPAHPEEGRKEPSMWLTRREEEEDAESQVTADLPVPLGAPRPGDIPENPPERPARRELQQALVPVMKKLVPVRRRAWGQLCLPPQRLRVTRHPLIPAPVLGLLLLLLLSVLLLGPSPPPTWPHLQLCYLQPPPV.

Residues methionine 1–proline 521 lie on the Cytoplasmic side of the membrane. A disordered region spans residues alanine 125–arginine 153. Residues serine 164–glutamate 349 adopt a coiled-coil conformation. The interval glutamate 407–proline 481 is disordered. Basic and acidic residues predominate over residues alanine 431–glutamate 448. Residues leucine 522–glycine 542 traverse the membrane as a helical; Anchor for type IV membrane protein segment. The interaction with SUN1 stretch occupies residues leucine 541–valine 562. The Perinuclear space portion of the chain corresponds to proline 543–valine 562.

As to quaternary structure, core component the LINC complex which is composed of inner nuclear membrane SUN domain-containing proteins coupled to outer nuclear membrane KASH domain-containing nesprins. SUN and KASH domain-containing proteins seem to bind each other promiscuously; however, differentially expression of LINC complex constituents is giving rise to specific assemblies. At least SUN1/2-containing core LINC complexes are proposed to be hexameric composed of three protomers of each KASH and SUN domain-containing protein. Interacts with SUN1; this interaction mediates its telomere localization by forming a SUN1:KASH5 LINC complex. Component of a probable SUN2:KASH5 LINC complex. Self-associates. Interacts with DYNC1H1, DCTN1, DYNC1I1/2 and PAFAH1B1; suggesting the association with the dynein-dynactin motor complex. In terms of tissue distribution, expressed in testis (at protein level).

The protein localises to the nucleus outer membrane. The protein resides in the nucleus. It is found in the chromosome. Its subcellular location is the telomere. It localises to the nucleus envelope. As a component of the LINC (LInker of Nucleoskeleton and Cytoskeleton) complex, involved in the connection between the nuclear lamina and the cytoskeleton. The nucleocytoplasmic interactions established by the LINC complex play an important role in the transmission of mechanical forces across the nuclear envelope and in nuclear movement and positioning. Required for telomere attachment to nuclear envelope in the prophase of meiosis. Required for rapid telomere prophase movements implicating a SUN1/2:KASH5 LINC complex in which SUN1 and SUN2 seem to act at least partial redundantly. Required for homolog pairing during meiotic prophase in spermatocytes and probably oocytes. Essential for male and female gametogenesis. Recruits cytoplasmic dynein to telomere attachment sites at the nuclear envelope in spermatocytes. In oocytes is involved in meiotic resumption and spindle formation. This Homo sapiens (Human) protein is Protein KASH5.